A 556-amino-acid chain; its full sequence is Polypeptide N-acetylgalactosaminyltransferase 13 (556 aa).

Over 1–4 the chain is Cytoplasmic; it reads MRRF. The helical; Signal-anchor for type II membrane protein transmembrane segment at 5 to 27 threads the bilayer; the sequence is VYCKVVLATSLMWVLVDVFLLLY. Residues 28-556 lie on the Lumenal side of the membrane; the sequence is FSECNKCDDK…WLLRNMTLGT (529 aa). N-linked (GlcNAc...) asparagine glycosylation is found at Asn94 and Asn116. Cystine bridges form between Cys105-Cys338, Cys329-Cys407, Cys441-Cys458, Cys481-Cys496, and Cys522-Cys539. The tract at residues 114–224 is catalytic subdomain A; the sequence is LPNTSVVIVF…LGWLEPLLAR (111 aa). Asp155 and Arg185 together coordinate substrate. Asp208 and His210 together coordinate Mn(2+). The segment at 284–346 is catalytic subdomain B; the sequence is PVRTPTMAGG…TCSHVGHVFR (63 aa). Trp315 provides a ligand contact to substrate. His343 serves as a coordination point for Mn(2+). Positions 346 and 351 each coordinate substrate. The Ricin B-type lectin domain occupies 428–550; that stretch reads YSLGEIRNVE…GSRSQQWLLR (123 aa). Residue Asn551 is glycosylated (N-linked (GlcNAc...) asparagine).

The protein belongs to the glycosyltransferase 2 family. GalNAc-T subfamily. The cofactor is Mn(2+). As to expression, specifically expressed in neuronal cells. Expressed in fetal brain, whole adult brain, cerebral cortex and cerebellum. Not expressed in other tissues tested.

The protein resides in the golgi apparatus membrane. The catalysed reaction is L-seryl-[protein] + UDP-N-acetyl-alpha-D-galactosamine = a 3-O-[N-acetyl-alpha-D-galactosaminyl]-L-seryl-[protein] + UDP + H(+). It carries out the reaction L-threonyl-[protein] + UDP-N-acetyl-alpha-D-galactosamine = a 3-O-[N-acetyl-alpha-D-galactosaminyl]-L-threonyl-[protein] + UDP + H(+). Its pathway is protein modification; protein glycosylation. Its function is as follows. Catalyzes the initial reaction in O-linked oligosaccharide biosynthesis, the transfer of an N-acetyl-D-galactosamine (GalNAc) residue from UDP-GalNAc to a serine or threonine residue on the protein receptor. Generates GalNAc-O-Ser/Thr structure also known as Tn antigen, which itself is immunogenic but also serves as a precursor for the synthesis of different mucin-type O-glycan core structures. Contributes to the synthesis of O-linked glycans on mucins and proteoglycans of the central nervous system. May promote neurogenesis through glycosylation and stabilization of PDPN. In terms of biological role, can glycosylate both unmodified peptides and glycopeptides that already contain an O-linked GalNAc sugar. Transfers GalNAc to Thr-/Ser-rich tandem repeats GTTPSPVPTTSTTSAP of MUC5AC, specifically on Thr-3 of non-glycosylated MUC5AC peptide, on Thr-12 and Thr-13 of preglycosylated MUC5AC at Thr-3 (MUC5AC-3), on Thr-3 of preglycosylated MUC5AC at Thr-13 (MUC5AC-13) and on Thr-12 of preglycosylated MUC5AC at Thr-3 and Thr-13 (MUC5AC-3,13). Transfers GalNAc to three consecutive serine/threonine residues on SDC3 forming a triplet-Tn epitope expressed in Purkinje cells of the developing brain. Can glycosylate both unmodified peptides and glycopeptides that already contain an O-linked GalNAc sugar. Transfers GalNAc to Thr-/Ser-rich tandem repeats GTTPSPVPTTSTTSAP of MUC5AC, specifically on Thr-3 of non-glycosylated MUC5AC peptide, on Thr-12 and Thr-13 of preglycosylated MUC5AC at Thr-3 (MUC5AC-3), on Thr-3 of preglycosylated MUC5AC at Thr-13 (MUC5AC-13) and on Thr-12 of preglycosylated MUC5AC at Thr-3 and Thr-13 (MUC5AC-3,13). The chain is Polypeptide N-acetylgalactosaminyltransferase 13 (GALNT13) from Homo sapiens (Human).